We begin with the raw amino-acid sequence, 207 residues long: DNA-directed RNA polymerase subunit alpha (207 aa).

This sequence belongs to the RNA polymerase alpha chain family. As to quaternary structure, in plastids the minimal PEP RNA polymerase catalytic core is composed of four subunits: alpha, beta, beta', and beta''. When a (nuclear-encoded) sigma factor is associated with the core the holoenzyme is formed, which can initiate transcription.

Its subcellular location is the plastid. The protein resides in the chloroplast. It catalyses the reaction RNA(n) + a ribonucleoside 5'-triphosphate = RNA(n+1) + diphosphate. DNA-dependent RNA polymerase catalyzes the transcription of DNA into RNA using the four ribonucleoside triphosphates as substrates. The polypeptide is DNA-directed RNA polymerase subunit alpha (rpoA) (Euglena anabaena (Euglenaria anabaena)).